The primary structure comprises 185 residues: Ribosome-recycling factor (185 aa).

This sequence belongs to the RRF family.

It is found in the cytoplasm. Functionally, responsible for the release of ribosomes from messenger RNA at the termination of protein biosynthesis. May increase the efficiency of translation by recycling ribosomes from one round of translation to another. The sequence is that of Ribosome-recycling factor from Alcanivorax borkumensis (strain ATCC 700651 / DSM 11573 / NCIMB 13689 / SK2).